A 195-amino-acid chain; its full sequence is Imidazoleglycerol-phosphate dehydratase (195 aa).

The protein belongs to the imidazoleglycerol-phosphate dehydratase family.

The protein localises to the cytoplasm. The catalysed reaction is D-erythro-1-(imidazol-4-yl)glycerol 3-phosphate = 3-(imidazol-4-yl)-2-oxopropyl phosphate + H2O. The protein operates within amino-acid biosynthesis; L-histidine biosynthesis; L-histidine from 5-phospho-alpha-D-ribose 1-diphosphate: step 6/9. The sequence is that of Imidazoleglycerol-phosphate dehydratase from Cupriavidus metallidurans (strain ATCC 43123 / DSM 2839 / NBRC 102507 / CH34) (Ralstonia metallidurans).